The sequence spans 353 residues: Photosystem II protein D1 (353 aa).

Threonine 2 carries the post-translational modification N-acetylthreonine. Threonine 2 is subject to Phosphothreonine. 3 helical membrane-spanning segments follow: residues 29 to 46 (YIGWFGVLMIPTLLTATS), 118 to 133 (HFLLGVACYMGREWEL), and 142 to 156 (WIVVAYSAPVAAATA). Histidine 118 provides a ligand contact to chlorophyll a. Tyrosine 126 provides a ligand contact to pheophytin a. Aspartate 170 and glutamate 189 together coordinate [CaMn4O5] cluster. Residues 197-218 (FHMLGVAGVFGGSLFSAMHGSL) traverse the membrane as a helical segment. Residue histidine 198 coordinates chlorophyll a. A quinone-binding positions include histidine 215 and 264–265 (SF). Histidine 215 provides a ligand contact to Fe cation. Histidine 272 contributes to the Fe cation binding site. Residues 274–288 (FLAAWPVVGIWFTAL) form a helical membrane-spanning segment. Histidine 332, glutamate 333, aspartate 342, and alanine 344 together coordinate [CaMn4O5] cluster. Positions 345-353 (AVDAPSISG) are excised as a propeptide.

It belongs to the reaction center PufL/M/PsbA/D family. PSII is composed of 1 copy each of membrane proteins PsbA, PsbB, PsbC, PsbD, PsbE, PsbF, PsbH, PsbI, PsbJ, PsbK, PsbL, PsbM, PsbT, PsbX, PsbY, PsbZ, Psb30/Ycf12, at least 3 peripheral proteins of the oxygen-evolving complex and a large number of cofactors. It forms dimeric complexes. Requires The D1/D2 heterodimer binds P680, chlorophylls that are the primary electron donor of PSII, and subsequent electron acceptors. It shares a non-heme iron and each subunit binds pheophytin, quinone, additional chlorophylls, carotenoids and lipids. D1 provides most of the ligands for the Mn4-Ca-O5 cluster of the oxygen-evolving complex (OEC). There is also a Cl(-1) ion associated with D1 and D2, which is required for oxygen evolution. The PSII complex binds additional chlorophylls, carotenoids and specific lipids. as cofactor. In terms of processing, tyr-161 forms a radical intermediate that is referred to as redox-active TyrZ, YZ or Y-Z. C-terminally processed by CTPA; processing is essential to allow assembly of the oxygen-evolving complex and thus photosynthetic growth.

It is found in the plastid. The protein resides in the chloroplast thylakoid membrane. The catalysed reaction is 2 a plastoquinone + 4 hnu + 2 H2O = 2 a plastoquinol + O2. Photosystem II (PSII) is a light-driven water:plastoquinone oxidoreductase that uses light energy to abstract electrons from H(2)O, generating O(2) and a proton gradient subsequently used for ATP formation. It consists of a core antenna complex that captures photons, and an electron transfer chain that converts photonic excitation into a charge separation. The D1/D2 (PsbA/PsbD) reaction center heterodimer binds P680, the primary electron donor of PSII as well as several subsequent electron acceptors. In Vicia faba (Broad bean), this protein is Photosystem II protein D1.